The following is a 61-amino-acid chain: uncharacterized protein (61 aa).

This is an uncharacterized protein from Autographa californica nuclear polyhedrosis virus (AcMNPV).